The following is a 38-amino-acid chain: Photosystem II reaction center protein L (38 aa).

The helical transmembrane segment at 17–37 threads the bilayer; the sequence is SLYWGLLLIFVLAVLFSNYFF.

This sequence belongs to the PsbL family. PSII is composed of 1 copy each of membrane proteins PsbA, PsbB, PsbC, PsbD, PsbE, PsbF, PsbH, PsbI, PsbJ, PsbK, PsbL, PsbM, PsbT, PsbX, PsbY, PsbZ, Psb30/Ycf12, at least 3 peripheral proteins of the oxygen-evolving complex and a large number of cofactors. It forms dimeric complexes.

The protein localises to the plastid. The protein resides in the chloroplast thylakoid membrane. In terms of biological role, one of the components of the core complex of photosystem II (PSII). PSII is a light-driven water:plastoquinone oxidoreductase that uses light energy to abstract electrons from H(2)O, generating O(2) and a proton gradient subsequently used for ATP formation. It consists of a core antenna complex that captures photons, and an electron transfer chain that converts photonic excitation into a charge separation. This subunit is found at the monomer-monomer interface and is required for correct PSII assembly and/or dimerization. This chain is Photosystem II reaction center protein L, found in Huperzia lucidula (Shining clubmoss).